The following is a 231-amino-acid chain: Large ribosomal subunit protein uL1 (231 aa).

This sequence belongs to the universal ribosomal protein uL1 family. In terms of assembly, part of the 50S ribosomal subunit.

Its function is as follows. Binds directly to 23S rRNA. The L1 stalk is quite mobile in the ribosome, and is involved in E site tRNA release. Protein L1 is also a translational repressor protein, it controls the translation of the L11 operon by binding to its mRNA. The protein is Large ribosomal subunit protein uL1 of Kosmotoga olearia (strain ATCC BAA-1733 / DSM 21960 / TBF 19.5.1).